The following is a 197-amino-acid chain: Recombination protein RecR (197 aa).

The C4-type zinc-finger motif lies at 55-70 (CVQCRDFTESEICTIC). One can recognise a Toprim domain in the interval 78 to 173 (QQLCVVESPA…RPSRLAQGMP (96 aa)).

Belongs to the RecR family.

May play a role in DNA repair. It seems to be involved in an RecBC-independent recombinational process of DNA repair. It may act with RecF and RecO. This is Recombination protein RecR from Xanthomonas euvesicatoria pv. vesicatoria (strain 85-10) (Xanthomonas campestris pv. vesicatoria).